Reading from the N-terminus, the 185-residue chain is Protein TIFY 5 (185 aa).

In terms of domain architecture, Tify spans 38-72 (AAEARRNLTIFYNGRMCAVNVTELQARTIISMASQ). The tract at residues 77 to 185 (KQQQQQIQGR…RAAAPLYARR (109 aa)) is disordered. The span at 137 to 157 (PRAGLQAAAAAAPTMNQPPAA) shows a compositional bias: low complexity. A Jas motif is present at residues 155-182 (PAASGLSMKRSLQRFLEKRKTRAAAPLY). Positions 162-169 (MKRSLQRF) match the Nuclear localization signal motif.

Belongs to the TIFY/JAZ family. Post-translationally, ubiquitinated. Targeted for degradation by the SCF(COI1) E3 ubiquitin ligase-proteasome pathway during jasmonate signaling.

It localises to the nucleus. In terms of biological role, repressor of jasmonate responses. The polypeptide is Protein TIFY 5 (Oryza sativa subsp. indica (Rice)).